The primary structure comprises 166 residues: Urease accessory protein UreE (166 aa).

It belongs to the UreE family.

The protein resides in the cytoplasm. Its function is as follows. Involved in urease metallocenter assembly. Binds nickel. Probably functions as a nickel donor during metallocenter assembly. The polypeptide is Urease accessory protein UreE (Pseudomonas savastanoi pv. phaseolicola (strain 1448A / Race 6) (Pseudomonas syringae pv. phaseolicola (strain 1448A / Race 6))).